The primary structure comprises 452 residues: Keratin, type II cytoskeletal 80 (452 aa).

Residues 1-82 are head; it reads MACRSCVVGF…DPAVQQLKNQ (82 aa). Ser45 is subject to Phosphoserine. Residues 82 to 118 form a coil 1A region; that stretch reads QEKEEMKALNDKFASLIGKVQALEQRNQLLETRWSFL. Residues 83-394 enclose the IF rod domain; the sequence is EKEEMKALND…KLVEGEEGRM (312 aa). Residues 119–135 form a linker 1 region; it reads QGQDSAIFDLGHLYEEY. The tract at residues 136–227 is coil 1B; that stretch reads QGRLQEELRK…TIYEQELKDL (92 aa). Residues 228–251 are linker 12; the sequence is AAQVKDVSVTVGMDSRCHIDLSGI. Positions 252–390 are coil 2; it reads VEEVKAQYDA…ATYRKLVEGE (139 aa). Positions 391–452 are tail; sequence EGRMDSPSAT…YFSQESEVSE (62 aa). Ser396 is subject to Phosphoserine. The tract at residues 412–434 is disordered; it reads AASRSGLSKAPSRKKKGSKGPVI.

Belongs to the intermediate filament family. As to quaternary structure, heterotetramer of two type I and two type II keratins. In terms of tissue distribution, weakly expressed in tongue, but not skin or in any other tissues or organs examined.

This Homo sapiens (Human) protein is Keratin, type II cytoskeletal 80 (KRT80).